Reading from the N-terminus, the 669-residue chain is Dymeclin (669 aa).

Glycine 2 carries N-myristoyl glycine lipidation.

It belongs to the dymeclin family. In terms of processing, myristoylated in vitro; myristoylation is not essential for protein targeting to Golgi compartment.

It localises to the cytoplasm. The protein resides in the golgi apparatus. Necessary for correct organization of Golgi apparatus. This Xenopus laevis (African clawed frog) protein is Dymeclin (dym).